Consider the following 562-residue polypeptide: NAD-dependent malic enzyme (562 aa).

Tyr-101 (proton donor) is an active-site residue. An NAD(+)-binding site is contributed by Arg-154. The active-site Proton acceptor is Lys-172. Positions 243, 244, and 267 each coordinate a divalent metal cation. Residues Asp-267 and Asn-415 each coordinate NAD(+).

It belongs to the malic enzymes family. In terms of assembly, homotetramer. It depends on Mg(2+) as a cofactor. Mn(2+) is required as a cofactor.

The enzyme catalyses (S)-malate + NAD(+) = pyruvate + CO2 + NADH. It catalyses the reaction oxaloacetate + H(+) = pyruvate + CO2. The protein is NAD-dependent malic enzyme of Shewanella piezotolerans (strain WP3 / JCM 13877).